The chain runs to 618 residues: MTQEYDNKRPVLVLQNEALYPQRRSYTSEDEAWKSFLENPLTAATKAMMSINGDEDSAAALGLLYDYYKVPRERRSSTAKPEVEHPEPDHSKRNSIPIVTEQPLISAGENRVQVLKNVPFNIVLPHGNQLGIDKRGHLTVPDTTVTVSIATMPTHSIKTETQPHGFTVGIPPAVYHPEPTERVVVFDRNLSTDQFSSGAQAPNAQRRTPDSTFSETFKEGVQEVFFPSDLSLRMPGMNSEDYVFDSVSGNNFEYTLEASKSLRQKPGDSTMTYLNKGQFYPITLKEVSSNEGIHHPISKVRSVTMVVFAEDKSREDQLRHWKYWHSRQHTAKQRCIDIADYKESFNTISNIEEIAYNAISFTWDINDEAKVFISVNCLSTDFSSQKGVKGLPLNIQIDTYSYNNRSNKPVHRAYCQIKVFCDKGAERKIRDEERKQSKRKVSDVKVPLLPSHKRMDITVFKPFIDLDTQPVLFIPDVHFASLQRGTHVLPIASEELEGEGSVLKRGPYSTEDDFAVPPSAKLARIEEPKRVLLYVRKESEEVFDALMLKTPSLKGLMEAISDKYDVPHDKIGKIFKKCKKGILVNMDDNIVKHYSNEDTFQLQIEEAGGSYKLTLIEI.

The transcription activation stretch occupies residues 1-91 (MTQEYDNKRP…EVEHPEPDHS (91 aa)). The span at 74 to 92 (RRSSTAKPEVEHPEPDHSK) shows a compositional bias: basic and acidic residues. Positions 74 to 94 (RRSSTAKPEVEHPEPDHSKRN) are disordered. Thr-208 carries the phosphothreonine modification. Residues 248–474 (SGNNFEYTLE…DLDTQPVLFI (227 aa)) enclose the Grh/CP2 DB domain. 2 interaction with DNA regions span residues 380-389 (TDFSSQKGVK) and 427-430 (RKIR).

This sequence belongs to the grh/CP2 family. Grainyhead subfamily. As to quaternary structure, binds DNA as homodimer. Homodimer, also forms heterodimers with GRHL2 or GRHL3. Post-translationally, methylation at Arg-9 and Lys-116 may be involved in regulating transcriptional activation.

The protein resides in the nucleus. Functionally, transcription factor involved in epithelial development. Binds directly to the consensus DNA sequence 5'-AACCGGTT-3'. Important regulator of DSG1 in the context of hair anchorage and epidermal differentiation, participates in the maintenance of the skin barrier. There is no genetic interaction with GRHL3, nor functional cooperativity due to diverse target gene selectivity during epithelia development. May play a role in regulating glucose homeostasis and insulin signaling. The sequence is that of Grainyhead-like protein 1 homolog (GRHL1) from Pongo abelii (Sumatran orangutan).